Reading from the N-terminus, the 232-residue chain is Large ribosomal subunit protein uL1 (232 aa).

The protein belongs to the universal ribosomal protein uL1 family. As to quaternary structure, part of the 50S ribosomal subunit.

In terms of biological role, binds directly to 23S rRNA. The L1 stalk is quite mobile in the ribosome, and is involved in E site tRNA release. Protein L1 is also a translational repressor protein, it controls the translation of the L11 operon by binding to its mRNA. This Bartonella henselae (strain ATCC 49882 / DSM 28221 / CCUG 30454 / Houston 1) (Rochalimaea henselae) protein is Large ribosomal subunit protein uL1.